The sequence spans 190 residues: UPF0301 protein DP2218 (190 aa).

The protein belongs to the UPF0301 (AlgH) family.

This is UPF0301 protein DP2218 from Desulfotalea psychrophila (strain LSv54 / DSM 12343).